The following is a 439-amino-acid chain: Agnestins biosynthesis cluster transcriptional coactivator AgnL9 (439 aa).

The HTH iclR-type domain occupies 79-149 (MTIQTQLLAC…EPGHITHSAL (71 aa)). The segment at residues 109-128 (MKDVSELIDVPENQLGRIVR) is a DNA-binding region (H-T-H motif).

The protein resides in the nucleus. Its function is as follows. Transcriptional coactivator; part of the gene cluster that mediates the biosynthesis of agnestins, dihydroxy-xanthone metabolites. This Paecilomyces divaricatus (Penicillium divaricatum) protein is Agnestins biosynthesis cluster transcriptional coactivator AgnL9.